The primary structure comprises 692 residues: SH3 domain-containing protein 21 (692 aa).

The disordered stretch occupies residues 1 to 60; it reads MVQSELQLQPRAGGRAEAASWGDRGNDKGGFGNPDMPSVSPGPQRPPKLSSLAYDSPPDY. Positions 65–126 constitute an SH3 domain; sequence SHPEAYRVLF…PDNFVLPPPP (62 aa). Disordered regions lie at residues 132–501, 536–605, and 672–692; these read PRKV…EVLP, PKGG…SQET, and VMQG…TQTY. The segment covering 177–186 has biased composition (basic and acidic residues); the sequence is PSRDSQKLTS. The segment covering 210 to 220 has biased composition (polar residues); the sequence is TQTPQQRSVSS. Basic and acidic residues-rich tracts occupy residues 378–396, 490–501, and 542–582; these read VSTR…EALQ, NEERLLRGEVLP, and SKEE…KEEV. Residues 628 to 678 are a coiled coil; it reads SLRGEVESLRRALELMGVQLERKLTDIWEELKSEKEQRQRLEVQVMQGTQK. Residues 673 to 692 are compositionally biased toward polar residues; it reads MQGTQKSQTPRIIHAQTQTY.

The sequence is that of SH3 domain-containing protein 21 (SH3D21) from Macaca fascicularis (Crab-eating macaque).